A 133-amino-acid chain; its full sequence is Salmonella pathogenicity island 2 protein C (133 aa).

In terms of assembly, interacts with the mammalian NIPSNAP3A and HOOK3 proteins in infected cells.

It localises to the secreted. The protein resides in the cytoplasm. Virulence protein that plays a central role in mammalian macrophage infection, by inhibiting phagosome-lysosome fusion and cellular trafficking, including trafficking of organelles that are devoid of Salmonella. May act by disrupting the function of the mammalian HOOK3 protein, a protein involved in the cellular traffic. Also required for actin ADP-ribosylase SpvB activity. This Salmonella typhimurium (strain 14028s / SGSC 2262) protein is Salmonella pathogenicity island 2 protein C (spiC).